Consider the following 250-residue polypeptide: Tetrathionate reductase subunit B (250 aa).

Residues 1–33 constitute a signal peptide (tat-type signal); sequence MWTGVNMDSSKRQFLQQLGVLTAGASLVPLAEA. 4Fe-4S ferredoxin-type domains are found at residues 50 to 79, 97 to 128, and 129 to 158; these read YAML…PQGA, VTNV…QRED, and GIVV…INHE. 16 residues coordinate [4Fe-4S] cluster: C59, C62, C65, C69, C106, C109, C114, C118, C138, C141, C144, C148, C165, C168, C180, and C184.

Probably composed of three subunits: TtrA, TtrB and TtrC. Post-translationally, predicted to be exported by the Tat system. The position of the signal peptide cleavage has not been experimentally proven.

Its subcellular location is the periplasm. It localises to the cell inner membrane. Part of a membrane-bound tetrathionate reductase that catalyzes the reduction of tetrathionate to thiosulfate. TtrB is probably involved in transfer of electrons from TtrC to TtrA. During mice infection, the ability to use tetrathionate as an electron acceptor is a growth advantage for S.typhimurium over the competing microbiota in the lumen of the inflamed gut. The sequence is that of Tetrathionate reductase subunit B (ttrB) from Salmonella typhimurium (strain LT2 / SGSC1412 / ATCC 700720).